Here is a 174-residue protein sequence, read N- to C-terminus: MGKITFYEDRGFQGRHYECSTDHSNLQPYFSRCNSVRVDSGCWMLYEQPNFTGCQYFLRRGDYPDYQQWMGFSDSVRSCHLIPHSSSHRIRIYEREDYRGQMVEITDDCPHLQDRFHFSDFHSFHVIEGYWVLYEMPNYRGRQYLLRPREYRRYHDWGAMNARVGSLRRIMDYY.

Beta/gamma crystallin 'Greek key' domains are found at residues 2-40 and 41-83; these read GKIT…RVDS and GCWM…HLIP. A connecting peptide region spans residues 84–87; sequence HSSS. Beta/gamma crystallin 'Greek key' domains are found at residues 88 to 128 and 129 to 171; these read HRIR…HVIE and GYWV…RRIM.

Belongs to the beta/gamma-crystallin family.

Crystallins are the dominant structural components of the vertebrate eye lens. This Rattus norvegicus (Rat) protein is Gamma-crystallin F (Crygf).